We begin with the raw amino-acid sequence, 234 residues long: Leucyl/phenylalanyl-tRNA--protein transferase (234 aa).

Belongs to the L/F-transferase family.

Its subcellular location is the cytoplasm. It carries out the reaction N-terminal L-lysyl-[protein] + L-leucyl-tRNA(Leu) = N-terminal L-leucyl-L-lysyl-[protein] + tRNA(Leu) + H(+). The enzyme catalyses N-terminal L-arginyl-[protein] + L-leucyl-tRNA(Leu) = N-terminal L-leucyl-L-arginyl-[protein] + tRNA(Leu) + H(+). The catalysed reaction is L-phenylalanyl-tRNA(Phe) + an N-terminal L-alpha-aminoacyl-[protein] = an N-terminal L-phenylalanyl-L-alpha-aminoacyl-[protein] + tRNA(Phe). Functionally, functions in the N-end rule pathway of protein degradation where it conjugates Leu, Phe and, less efficiently, Met from aminoacyl-tRNAs to the N-termini of proteins containing an N-terminal arginine or lysine. In Shigella dysenteriae serotype 1 (strain Sd197), this protein is Leucyl/phenylalanyl-tRNA--protein transferase.